A 120-amino-acid chain; its full sequence is Holo-[acyl-carrier-protein] synthase (120 aa).

Mg(2+) is bound by residues Asp8 and Glu60.

It belongs to the P-Pant transferase superfamily. AcpS family. It depends on Mg(2+) as a cofactor.

Its subcellular location is the cytoplasm. It catalyses the reaction apo-[ACP] + CoA = holo-[ACP] + adenosine 3',5'-bisphosphate + H(+). Functionally, transfers the 4'-phosphopantetheine moiety from coenzyme A to a Ser of acyl-carrier-protein. The protein is Holo-[acyl-carrier-protein] synthase of Anaplasma marginale (strain Florida).